The following is a 193-amino-acid chain: UPF0301 protein SCO2948 (193 aa).

Belongs to the UPF0301 (AlgH) family.

The polypeptide is UPF0301 protein SCO2948 (Streptomyces coelicolor (strain ATCC BAA-471 / A3(2) / M145)).